Here is a 489-residue protein sequence, read N- to C-terminus: L-asparagine permease 1 (489 aa).

The next 12 membrane-spanning stretches (helical) occupy residues 25–45 (QLQMIGIGGAIGTGLFLGASG), 49–69 (KAGPGLFLVYGVCGVFVFLIL), 100–120 (AVGWMYFLHWAMTSIVDTTAI), 137–157 (ILALIALTVVLSMNLISVEWF), 162–182 (FWAALIKVLALMAFLVVGTVF), 210–230 (WLPLLIVTSGVVFAYSAVELV), 255–275 (IAIFYVGSVALLALLLPYTAY), 289–309 (IGFHGAGDLMNIVVLTAALSS), 344–364 (YGGIVLTAVITLFGVALNAFK), 369–389 (FEIVLNMSALGIIAGWATIVL), 413–433 (SPYSGYLTLLFLLVVLVTMAS), and 439–459 (TWTVATLIIVIPALTAGWYLV).

This sequence belongs to the amino acid-polyamine-organocation (APC) superfamily. Amino acid transporter (AAT) (TC 2.A.3.1) family.

It is found in the cell membrane. The polypeptide is L-asparagine permease 1 (ansP1) (Mycobacterium bovis (strain ATCC BAA-935 / AF2122/97)).